The chain runs to 1408 residues: ABC transporter B family member 20 (1408 aa).

Positions 14-49 (HMQPLTPVSEVSEPPESPSPYLDPGAESGGGTGTAA) are disordered. Over residues 20-39 (PVSEVSEPPESPSPYLDPGA) the composition is skewed to low complexity. A helical membrane pass occupies residues 86–106 (VLMIVGSVAAAAHGTALIVYL). The ABC transmembrane type-1 1 domain occupies 88–381 (MIVGSVAAAA…AATNFYSFDQ (294 aa)). Asn-120 is a glycosylation site (N-linked (GlcNAc...) asparagine). The next 3 membrane-spanning stretches (helical) occupy residues 141 to 161 (IVYIAGGVFISGWIEVSCWIL), 214 to 233 (VGNYIHNMATFISGLVIGFV), and 238 to 260 (IALITLATGPFIVAAGGISNIFL). N-linked (GlcNAc...) asparagine glycosylation is present at Asn-293. 2 helical membrane-spanning segments follow: residues 312-332 (GILISLVQGLGLGFTYGLAIC) and 353-373 (GEIIAALFAVILSGLGLNQAA). The ABC transporter 1 domain occupies 414–649 (IEFRNVYFSY…GGLYAELLKC (236 aa)). 449–456 (GRNGSGKS) contacts ATP. Asn-451 is a glycosylation site (N-linked (GlcNAc...) asparagine). 2 disordered regions span residues 676 to 735 (SSAG…SLDC) and 752 to 816 (LPHL…DAQH). Residues 762 to 771 (CPQQKSNGSE) are compositionally biased toward polar residues. A glycan (N-linked (GlcNAc...) asparagine) is linked at Asn-768. Residues 802–816 (DDTKANGKASKDAQH) show a composition bias toward basic and acidic residues. Residues 836-1124 (AVLGSLGAAI…PFGLAPYILK (289 aa)) enclose the ABC transmembrane type-1 2 domain. 6 consecutive transmembrane segments (helical) span residues 841–861 (LGAAIFGSFNPLLAYVIALVV), 881–901 (LIIACMGIVTVVANFLQHFYF), 959–979 (IFIQDSFAVIVALLIGLLLGW), 983–1003 (LVALATLPILTLSAIAQKLWL), 1062–1082 (IGFAFGFSQFLLFACNALLLW), and 1103–1123 (MVFSFATFALVEPFGLAPYIL). Residues 1159–1396 (IELKNVDFCY…NGLYVRLMQP (238 aa)) enclose the ABC transporter 2 domain. Asn-1179 carries an N-linked (GlcNAc...) asparagine glycan. 1194–1201 (GVSGSGKS) lines the ATP pocket. 2 N-linked (GlcNAc...) asparagine glycosylation sites follow: Asn-1261 and Asn-1347.

This sequence belongs to the ABC transporter superfamily. ABCB family. Multidrug resistance exporter (TC 3.A.1.201) subfamily. In terms of tissue distribution, expressed in aerial tissues.

The protein resides in the membrane. It catalyses the reaction (indol-3-yl)acetate(in) + ATP + H2O = (indol-3-yl)acetate(out) + ADP + phosphate + H(+). Its function is as follows. Probable auxin efflux transporter that contributes, together with ABCB6 and in a FKBP42/TWD1-dependent manner, to the regulation of leaf position and morphology, internode distribution, roots development, and inflorescence organization, probably by modulating auxin repartition. The protein is ABC transporter B family member 20 of Arabidopsis thaliana (Mouse-ear cress).